A 383-amino-acid chain; its full sequence is Neuropeptide Y receptor type 1 (383 aa).

Residues 1–34 (MNSTSFSQLENHSVHYNLSEEKPSFFAFENDDCH) are Extracellular-facing. N-linked (GlcNAc...) asparagine glycosylation is found at asparagine 2, asparagine 11, and asparagine 17. The helical transmembrane segment at 35 to 55 (LPLAVIFTLALAYGAVIILGV) threads the bilayer. Residues 56 to 87 (SGNLALILIILKQKEMRNVTNILIVNLSFSDL) lie on the Cytoplasmic side of the membrane. The chain crosses the membrane as a helical span at residues 88–108 (LVAIMCLPFTFVYTLMDHWIF). The Extracellular segment spans residues 109–116 (GEIMCKLN). A disulfide bridge connects residues cysteine 113 and cysteine 198. The chain crosses the membrane as a helical span at residues 117–137 (PFVQCVSITVSIFSLVLIAVE). Topologically, residues 138–154 (RHQLIINPRGWRPNNRH) are cytoplasmic. The chain crosses the membrane as a helical span at residues 155 to 175 (AYIGIAVIWVLAVASSLPFMI). At 176–211 (YQVLTDEPFQNVTLDAFKDKLVCFDQFPSDSHRLSY) the chain is on the extracellular side. Residues 212 to 232 (TTLLLVLQYFGPLCFIFICYF) form a helical membrane-spanning segment. The Cytoplasmic portion of the chain corresponds to 233–260 (KIYIRLKRRNNMMDKMRDSKYRSSESKR). Residues 261–281 (INIMLLSIVVAFAVCWLPLTI) traverse the membrane as a helical segment. Topologically, residues 282–299 (FNTVFDWNHQIIATCNHN) are extracellular. The helical transmembrane segment at 300 to 320 (LLFLLCHLTAMISTCVNPIFY) threads the bilayer. Topologically, residues 321-383 (GFLNKNFQRD…KISCVENEKI (63 aa)) are cytoplasmic. The S-palmitoyl cysteine moiety is linked to residue cysteine 338. Phosphoserine occurs at positions 368 and 376.

The protein belongs to the G-protein coupled receptor 1 family.

It is found in the cell membrane. Functionally, receptor for neuropeptide Y and peptide YY. The polypeptide is Neuropeptide Y receptor type 1 (NPY1R) (Cavia porcellus (Guinea pig)).